A 249-amino-acid chain; its full sequence is UPF0758 protein Oant_1909 (249 aa).

Positions 127 to 249 (VLGSWNKVIE…HASFRGLGLI (123 aa)) constitute an MPN domain. The Zn(2+) site is built by His198, His200, and Asp211. The short motif at 198–211 (HNHPSGDPTPSRAD) is the JAMM motif element.

It belongs to the UPF0758 family.

The polypeptide is UPF0758 protein Oant_1909 (Brucella anthropi (strain ATCC 49188 / DSM 6882 / CCUG 24695 / JCM 21032 / LMG 3331 / NBRC 15819 / NCTC 12168 / Alc 37) (Ochrobactrum anthropi)).